The sequence spans 119 residues: NADH-quinone oxidoreductase subunit A (119 aa).

The next 3 helical transmembrane spans lie at 7 to 27, 63 to 83, and 88 to 108; these read FPVL…MFLG, LIAI…PWGV, and IGWL…VGFV.

It belongs to the complex I subunit 3 family. As to quaternary structure, NDH-1 is composed of 14 different subunits. Subunits NuoA, H, J, K, L, M, N constitute the membrane sector of the complex.

The protein localises to the cell inner membrane. The enzyme catalyses a quinone + NADH + 5 H(+)(in) = a quinol + NAD(+) + 4 H(+)(out). Functionally, NDH-1 shuttles electrons from NADH, via FMN and iron-sulfur (Fe-S) centers, to quinones in the respiratory chain. The immediate electron acceptor for the enzyme in this species is believed to be ubiquinone. Couples the redox reaction to proton translocation (for every two electrons transferred, four hydrogen ions are translocated across the cytoplasmic membrane), and thus conserves the redox energy in a proton gradient. The sequence is that of NADH-quinone oxidoreductase subunit A from Polynucleobacter necessarius subsp. necessarius (strain STIR1).